The primary structure comprises 484 residues: HTH-type transcriptional regulator TauR (484 aa).

The 69-residue stretch at 16–84 (GSLQHRLRQM…GRSGTFVSAA (69 aa)) folds into the HTH gntR-type domain. The segment at residues 44–63 (TRALAAHLGVARITVTLAYA) is a DNA-binding region (H-T-H motif). K330 bears the N6-(pyridoxal phosphate)lysine mark.

The protein in the C-terminal section; belongs to the class-I pyridoxal-phosphate-dependent aminotransferase family. Pyridoxal 5'-phosphate serves as cofactor.

Functionally, transcriptional activator, which is essential for taurine-dependent expression of the tpa-tauR-xsc operon. Acts by binding to direct repeats in the promoter region. The sequence is that of HTH-type transcriptional regulator TauR from Rhodobacter capsulatus (strain ATCC BAA-309 / NBRC 16581 / SB1003).